A 240-amino-acid polypeptide reads, in one-letter code: Adapter protein MecA (240 aa).

Over residues 119 to 132 (QRKQQKKNHQDKQQ) the composition is skewed to basic and acidic residues. The tract at residues 119 to 138 (QRKQQKKNHQDKQQRRAHKP) is disordered.

Belongs to the MecA family. Homodimer.

In terms of biological role, enables the recognition and targeting of unfolded and aggregated proteins to the ClpC protease or to other proteins involved in proteolysis. The chain is Adapter protein MecA from Staphylococcus epidermidis (strain ATCC 35984 / DSM 28319 / BCRC 17069 / CCUG 31568 / BM 3577 / RP62A).